A 419-amino-acid polypeptide reads, in one-letter code: Mitogen-activated protein kinase pmk-2 (419 aa).

The region spanning 49–350 (YNSLKPLGEG…VSSALRHDYL (302 aa)) is the Protein kinase domain. ATP-binding positions include 55 to 63 (LGEGAYGVV) and lysine 78. Catalysis depends on aspartate 210, which acts as the Proton acceptor. Residue threonine 222 is modified to Phosphothreonine. Residues 222–224 (TGY) carry the TXY motif. The residue at position 224 (tyrosine 224) is a Phosphotyrosine.

The protein belongs to the protein kinase superfamily. CMGC Ser/Thr protein kinase family. MAP kinase subfamily. Requires Mg(2+) as cofactor. Post-translationally, dually phosphorylated on Thr-222 and Tyr-224, which activates the enzyme.

It is found in the cytoplasm. It catalyses the reaction L-seryl-[protein] + ATP = O-phospho-L-seryl-[protein] + ADP + H(+). The catalysed reaction is L-threonyl-[protein] + ATP = O-phospho-L-threonyl-[protein] + ADP + H(+). Its activity is regulated as follows. Activated by phosphorylation on threonine and tyrosine. Inhibited by pyridinyl-imidazole related compounds. In terms of biological role, responds to activation by environmental stress and pro-inflammatory cytokines by phosphorylating downstream targets. This is Mitogen-activated protein kinase pmk-2 (pmk-2) from Caenorhabditis elegans.